The primary structure comprises 498 residues: Neoxanthin synthase, chloroplastic (498 aa).

A chloroplast-targeting transit peptide spans 1–33 (METLLKPLTSLLLSSPTPHRSIFQQNPPSLNPT). Residues 16 to 38 (PTPHRSIFQQNPPSLNPTTKKKS) form a disordered region. Positions 22 to 33 (IFQQNPPSLNPT) are enriched in polar residues. Residue 84–112 (VIIIGAGPAGLRLAEHVSKYGIKVCCVDP) participates in NAD(+) binding.

Belongs to the lycopene cyclase family.

The protein localises to the plastid. It localises to the chloroplast. The catalysed reaction is all-trans-violaxanthin = all-trans-neoxanthin. Its pathway is carotenoid biosynthesis; neoxanthin biosynthesis. In terms of biological role, involved in the synthesis of neoxanthin, the last product of carotenoid synthesis and a precursor of abscisic acid. The sequence is that of Neoxanthin synthase, chloroplastic (NXS) from Solanum tuberosum (Potato).